The primary structure comprises 38 residues: Photosystem II reaction center protein X 2 (38 aa).

A helical transmembrane segment spans residues 8–28 (FLWSLVYGAVVLGLLFGAIVF).

This sequence belongs to the PsbX family. Type 1 subfamily. As to quaternary structure, PSII is composed of 1 copy each of membrane proteins PsbA, PsbB, PsbC, PsbD, PsbE, PsbF, PsbH, PsbI, PsbJ, PsbK, PsbL, PsbM, PsbT, PsbX, PsbY, PsbZ, Psb30/Ycf12, peripheral proteins PsbO, CyanoQ (PsbQ), PsbU, PsbV and a large number of cofactors. It forms dimeric complexes.

The protein localises to the cellular thylakoid membrane. Its function is as follows. Involved in the binding and/or turnover of quinones at the Q(B) site of photosystem II (PSII). PSII is a light-driven water plastoquinone oxidoreductase, using light energy to abstract electrons from H(2)O, generating a proton gradient subsequently used for ATP formation. The chain is Photosystem II reaction center protein X 2 from Synechococcus sp. (strain JA-3-3Ab) (Cyanobacteria bacterium Yellowstone A-Prime).